A 181-amino-acid polypeptide reads, in one-letter code: Oligoribonuclease (181 aa).

One can recognise an Exonuclease domain in the interval 8–171; it reads LVWLDMEMTG…ADIYESIDEL (164 aa). The active site involves Tyr-129.

It belongs to the oligoribonuclease family.

It localises to the cytoplasm. In terms of biological role, 3'-to-5' exoribonuclease specific for small oligoribonucleotides. This chain is Oligoribonuclease, found in Bordetella bronchiseptica (strain ATCC BAA-588 / NCTC 13252 / RB50) (Alcaligenes bronchisepticus).